Consider the following 564-residue polypeptide: 3beta-hydroxysteroid-dehydrogenase/decarboxylase isoform 2 (564 aa).

NAD(+) is bound at residue 16 to 21 (GGRGFA). 2 N-linked (GlcNAc...) asparagine glycosylation sites follow: asparagine 146 and asparagine 158. NAD(+)-binding residues include tyrosine 161 and lysine 165. Lysine 165 acts as the Proton donor in catalysis. A Reticulon domain is found at 384–564 (VADTLLWKDL…EKLFGSKKHD (181 aa)). The next 2 membrane-spanning stretches (helical) occupy residues 398 to 418 (IAIFILISIYYNFVATGSTVV) and 424 to 444 (ALLVASVFLFLHGILPEKIFG). An N-linked (GlcNAc...) asparagine glycan is attached at asparagine 474. 2 helical membrane-spanning segments follow: residues 486-506 (GNDWSFFFKVVFVLLALSLAG) and 507-527 (AISLHSIFVIGLPIAFLAFLV).

Belongs to the 3-beta-HSD family.

The protein localises to the endoplasmic reticulum membrane. It catalyses the reaction a 3beta-hydroxysteroid-4alpha-carboxylate + NAD(+) = a 3-oxosteroid + CO2 + NADH. The enzyme catalyses 4alpha-carboxy-4beta,14alpha-dimethyl-9beta,19-cyclo-5alpha-ergost-24(24(1))-en-3beta-ol + NAD(+) = cycloeucalenone + CO2 + NADH. It functions in the pathway steroid biosynthesis; zymosterol biosynthesis; zymosterol from lanosterol: step 4/6. Its function is as follows. 3beta-hydroxysteroid-dehydrogenase/decarboxylase involved in sterol synthesis. Catalyzes the formation of 3-oxosteroids from 3beta-hydroxysteroids-4alpha-carboxylate. Involved in the regulation of inflorescence internodes and leaves growth, probably by affecting auxin transporter activity possibly by altering sterol composition in the membranes. This Arabidopsis thaliana (Mouse-ear cress) protein is 3beta-hydroxysteroid-dehydrogenase/decarboxylase isoform 2.